A 578-amino-acid chain; its full sequence is Vacuolar protein 8 (578 aa).

A lipid anchor (N-myristoyl glycine) is attached at glycine 2. Residues cysteine 4, cysteine 5, and cysteine 7 are each lipidated (S-palmitoyl cysteine). Phosphoserine is present on residues serine 11 and serine 16. ARM repeat units lie at residues 37–75 (DKDQLDFYSGGPLKALTTLVYSDNLNLQRSAALAFAEIT), 76–114 (EKYVRQVSREVLEPILILLQSQDPQIQVAACAALGNLAV), 116–155 (NENKLLIVEMGGLEPLINQMMGDNVEVQCNAVGCITNLAT), 157–196 (DDNKHKIATSGALIPLTKLAKSKHIRVQRNATGALLNMTH), 198–237 (EENRKELVNAGAVPVLVSLLSSTDPDVQYYCTTALSNIAV), 239–280 (EANR…NLAS), 282–321 (TSYQLEIVRAGGLPHLVKLIQSDSIPLVLASVACIRNISI), 323–363 (PLNE…NLAA), and 407–446 (DVSKLDLLEANILDALIPMTFSQNQEVSGNAAAALANLCS). Lysine 77 is covalently cross-linked (Glycyl lysine isopeptide (Lys-Gly) (interchain with G-Cter in ubiquitin)). A Glycyl lysine isopeptide (Lys-Gly) (interchain with G-Cter in ubiquitin) cross-link involves residue lysine 515. Positions 527–557 (SGIDVKNPGSNNNPSSNDNNSNNNDTGSEHQ) are disordered. A compositionally biased stretch (low complexity) spans 533-552 (NPGSNNNPSSNDNNSNNNDT).

Belongs to the beta-catenin family. Interacts with NVJ1. Forms heterotetramers of two VAC8 and two NVJ1 or two VAC8 and two ATG13. Post-translationally, palmitoylated on one or more of its N-terminal cysteine residues by PFA3, which is required for vacuole fusion.

Its subcellular location is the vacuole membrane. Its function is as follows. Functions in both vacuole inheritance and protein targeting from the cytoplasm to vacuole (cvt). Involved in the formation of nucleus-vacuole junctions (NVJs) during piecemeal microautophagy of the nucleus (PMN). NVJs are interorganelle interfaces mediated by NVJ1 in the nuclear envelope and VAC8 on the vacuole membrane. Together, NVJ1 and VAC8 form Velcro-like patches through which teardrop-like portions of the nucleus are pinched off into the vacuolar lumen and degraded by the PMN process. This is Vacuolar protein 8 (VAC8) from Saccharomyces cerevisiae (strain ATCC 204508 / S288c) (Baker's yeast).